The primary structure comprises 416 residues: Polyadenylation and cleavage factor homolog 1 (416 aa).

Over residues 1–17 (MASNGSFSAQRNANART) the composition is skewed to polar residues. The interval 1-80 (MASNGSFSAQ…NNNNVSRVSS (80 aa)) is disordered. Over residues 70 to 80 (SNNNNVSRVSS) the composition is skewed to low complexity. The stretch at 199 to 220 (KELTDLLSLLNNEKEKKTLEAS) forms a coiled coil. The C2H2-type zinc-finger motif lies at 254 to 276 (RQCSSCGLRFKCQEEHSKHMDWH).

As to quaternary structure, forms a complex with cleavage and polyadenylation specificity factor (CPSF) subunits CLPS3, CLPS5, CPSF30, PCFS4, PCFS5, CSTF77 and FIPS3.

It is found in the nucleus. This is Polyadenylation and cleavage factor homolog 1 from Arabidopsis thaliana (Mouse-ear cress).